Here is a 154-residue protein sequence, read N- to C-terminus: Myoglobin (154 aa).

A Globin domain is found at 2–148 (GLSDGEWQIV…FRNDIAAKYK (147 aa)). Phosphoserine is present on Ser4. His65 provides a ligand contact to nitrite. O2 is bound at residue His65. At Thr68 the chain carries Phosphothreonine. Residue His94 participates in heme b binding.

Belongs to the globin family. As to quaternary structure, monomeric.

It localises to the cytoplasm. It is found in the sarcoplasm. The enzyme catalyses Fe(III)-heme b-[protein] + nitric oxide + H2O = Fe(II)-heme b-[protein] + nitrite + 2 H(+). The catalysed reaction is H2O2 + AH2 = A + 2 H2O. Its function is as follows. Monomeric heme protein which primary function is to store oxygen and facilitate its diffusion within muscle tissues. Reversibly binds oxygen through a pentacoordinated heme iron and enables its timely and efficient release as needed during periods of heightened demand. Depending on the oxidative conditions of tissues and cells, and in addition to its ability to bind oxygen, it also has a nitrite reductase activity whereby it regulates the production of bioactive nitric oxide. Under stress conditions, like hypoxia and anoxia, it also protects cells against reactive oxygen species thanks to its pseudoperoxidase activity. This Lycaon pictus (African wild dog) protein is Myoglobin (MB).